We begin with the raw amino-acid sequence, 232 residues long: Octanoyltransferase (232 aa).

The 188-residue stretch at 32 to 219 folds into the BPL/LPL catalytic domain; it reads DTIYDTLILL…SFMVFNFSSC (188 aa). Substrate contacts are provided by residues 77-84, 140-142, and 153-155; these read RGGDITYH, AIG, and GFA. C171 (acyl-thioester intermediate) is an active-site residue.

The protein belongs to the LipB family.

It is found in the cytoplasm. It carries out the reaction octanoyl-[ACP] + L-lysyl-[protein] = N(6)-octanoyl-L-lysyl-[protein] + holo-[ACP] + H(+). The protein operates within protein modification; protein lipoylation via endogenous pathway; protein N(6)-(lipoyl)lysine from octanoyl-[acyl-carrier-protein]: step 1/2. Catalyzes the transfer of endogenously produced octanoic acid from octanoyl-acyl-carrier-protein onto the lipoyl domains of lipoate-dependent enzymes. Lipoyl-ACP can also act as a substrate although octanoyl-ACP is likely to be the physiological substrate. The sequence is that of Octanoyltransferase from Dictyoglomus thermophilum (strain ATCC 35947 / DSM 3960 / H-6-12).